The chain runs to 205 residues: GTP cyclohydrolase-2 (205 aa).

Residue 49-53 participates in GTP binding; that stretch reads RLHSE. Residues C54, C65, and C67 each contribute to the Zn(2+) site. GTP is bound by residues Q70, 92–94, and T114; that span reads EGR. The active-site Proton acceptor is the D126. The Nucleophile role is filled by R128. Residues T149 and K154 each contribute to the GTP site.

The protein belongs to the GTP cyclohydrolase II family. Zn(2+) serves as cofactor.

The catalysed reaction is GTP + 4 H2O = 2,5-diamino-6-hydroxy-4-(5-phosphoribosylamino)-pyrimidine + formate + 2 phosphate + 3 H(+). The protein operates within cofactor biosynthesis; riboflavin biosynthesis; 5-amino-6-(D-ribitylamino)uracil from GTP: step 1/4. Its function is as follows. Catalyzes the conversion of GTP to 2,5-diamino-6-ribosylamino-4(3H)-pyrimidinone 5'-phosphate (DARP), formate and pyrophosphate. The sequence is that of GTP cyclohydrolase-2 from Pseudomonas putida (strain W619).